Reading from the N-terminus, the 592-residue chain is Endoribonuclease Arlr (592 aa).

The first 24 residues, Met1–Ala24, serve as a signal peptide directing secretion. Positions Pro83 to Thr329 are disordered. Positions Pro109–Pro120 are enriched in polar residues. 2 stretches are compositionally biased toward low complexity: residues Pro134 to Ser144 and Gly188 to Thr209. Composition is skewed to pro residues over residues Leu234–Gly249 and Leu258–Pro267. Residues Pro268 to Ala294 show a composition bias toward low complexity. Residues Thr329–Ile592 enclose the EndoU domain. Active-site residues include His473, His488, and Lys531.

It belongs to the ENDOU family. Monomer. Mn(2+) is required as a cofactor. Predominantly expressed in head. Expressed in fat body cells.

Its subcellular location is the endoplasmic reticulum lumen. The protein resides in the secreted. It catalyses the reaction a ribonucleotidyl-ribonucleotide-RNA + H2O = a 3'-end 3'-phospho-ribonucleotide-RNA + a 5'-end dephospho-ribonucleoside-RNA + H(+). In terms of biological role, endoribonuclease that cleaves single-stranded RNAs; unlike its paralog EndoU it does not appear to preferentially cleave at uridylates and releases linear products instead of products that have 2'-3'-cyclic phosphate termini. Preferentially cleaves single stranded RNA at sites with AU, UC and poly-U sites cleaved less efficiently. Targets mRNAs encoding proteins involved in lipid metabolism, particularly those involved in lipolysis, to regulate their expression. The protein is Endoribonuclease Arlr of Drosophila melanogaster (Fruit fly).